The following is a 3814-amino-acid chain: Hybrid PKS-NRPS synthetase pyvA (3814 aa).

Residues Met1 to Ser340 form the Ketosynthase family 3 (KS3) domain. Catalysis depends on for beta-ketoacyl synthase activity residues Cys87, His222, and His261. Residues Val441–Val758 are malonyl-CoA:ACP transacylase (MAT) domain. Ser533 functions as the For malonyltransferase activity in the catalytic mechanism. Residues His835 to Thr970 form an N-terminal hotdog fold region. Residues His835 to Arg1149 are dehydratase (DH) domain. The PKS/mFAS DH domain occupies His835–Ala1151. His867 acts as the Proton acceptor; for dehydratase activity in catalysis. Positions Thr970 to Thr993 are disordered. The interval Met991–Ala1151 is C-terminal hotdog fold. Asp1057 (proton donor; for dehydratase activity) is an active-site residue. The interval Gly1520 to Leu1836 is enoyl reductase (ER) domain. Positions Thr1864–Ile2036 are ketoreductase (KR) domain. Residues Ile2141–Phe2220 form the Carrier 1 domain. O-(pantetheine 4'-phosphoryl)serine is present on Ser2180. The segment covering Gln2228 to Ser2238 has biased composition (low complexity). The tract at residues Gln2228–Ser2270 is disordered. Residues Ala2239 to Gln2263 show a composition bias toward polar residues. Residues Leu2273–Glu2718 are condensation (C) domain 7. An adenylation (A) domain 8 region spans residues Pro2738–Ile3149. The interval Ser3257–Asp3304 is disordered. The Carrier 2 domain maps to Asp3304 to Val3379. Position 3339 is an O-(pantetheine 4'-phosphoryl)serine (Ser3339). The tract at residues Met3428–Thr3680 is thioesterase (TE) domain.

It in the C-terminal section; belongs to the NRP synthetase family.

It functions in the pathway secondary metabolite biosynthesis. Functionally, hybrid PKS-NRPS synthetase; part of the gene cluster that mediates the biosynthesis of pyranoviolin A, a pyranonigrin analog with a C-3 methoxy group. Initially, the PKS portion of pyvA synthesizes C-10 carbon chain from 5 molecules of malonyl-CoA, which is then condensed with the thiolation (T) domain-bound glycine activated by the adenylation (A) domain. The subsequent chain release by Dieckmann condensation (DKC) could be catalyzed by the TE domain present at the C-terminus of pyvA and/or the alpha/beta hydrolase pyvD, installing the tetramic acid moiety. The FAD-dependent monooxygenase pyvC next epoxidizes one of the olefins of the polyketide part, and the epoxide ring-opening induces the dihydro-gamma-pyrone ring formation. The cytochrome P450 monooxygeanse pyvB would be responsible for the 2 consecutive reactions, in which the dihydro-gamma-pyrone is oxidized to gamma-pyrone and C-7 is hydroxylated to yield pyranonigrin F. Finally, the O-methyltransferase pyvH methylates the C-3 hydroxy group to complete the biosynthesis. The chain is Hybrid PKS-NRPS synthetase pyvA from Aspergillus violaceofuscus (strain CBS 115571).